A 337-amino-acid polypeptide reads, in one-letter code: S-adenosylmethionine:tRNA ribosyltransferase-isomerase (337 aa).

It belongs to the QueA family. In terms of assembly, monomer.

The protein localises to the cytoplasm. The catalysed reaction is 7-aminomethyl-7-carbaguanosine(34) in tRNA + S-adenosyl-L-methionine = epoxyqueuosine(34) in tRNA + adenine + L-methionine + 2 H(+). It functions in the pathway tRNA modification; tRNA-queuosine biosynthesis. Its function is as follows. Transfers and isomerizes the ribose moiety from AdoMet to the 7-aminomethyl group of 7-deazaguanine (preQ1-tRNA) to give epoxyqueuosine (oQ-tRNA). The chain is S-adenosylmethionine:tRNA ribosyltransferase-isomerase from Legionella pneumophila (strain Paris).